Reading from the N-terminus, the 782-residue chain is uncharacterized protein (782 aa).

2 disordered regions span residues 1 to 25 (MFSP…STTS) and 175 to 195 (RPRT…EDLR). A compositionally biased stretch (low complexity) spans 13–25 (ESESVSNCESTTS). Residues 183–195 (RAGDASMSREDLR) are compositionally biased toward basic and acidic residues. Coiled coils occupy residues 223–331 (RENR…STLN), 348–398 (LSQF…VSTL), 428–601 (NRIN…QLLN), and 699–743 (TIET…IIAK). The tract at residues 748 to 782 (NIPKTEKSSPMKKVPPIENFRAKSQTSITGLSPVL) is disordered. Residues 769–782 (AKSQTSITGLSPVL) show a composition bias toward polar residues.

This is an uncharacterized protein from Caenorhabditis elegans.